The chain runs to 326 residues: GTP 3',8-cyclase (326 aa).

Positions 7–240 (AFARKFYYLR…AQVFHHSDYQ (234 aa)) constitute a Radical SAM core domain. Arg-16 lines the GTP pocket. Residues Cys-23 and Cys-27 each contribute to the [4Fe-4S] cluster site. S-adenosyl-L-methionine is bound at residue Tyr-29. Residue Cys-30 participates in [4Fe-4S] cluster binding. Residue Arg-65 participates in GTP binding. Gly-69 is an S-adenosyl-L-methionine binding site. Thr-96 contributes to the GTP binding site. Residue Ser-120 participates in S-adenosyl-L-methionine binding. Lys-157 provides a ligand contact to GTP. Met-191 is an S-adenosyl-L-methionine binding site. Positions 254 and 257 each coordinate [4Fe-4S] cluster. GTP is bound at residue 259-261 (RLR). Residue Cys-271 participates in [4Fe-4S] cluster binding.

Belongs to the radical SAM superfamily. MoaA family. In terms of assembly, monomer and homodimer. The cofactor is [4Fe-4S] cluster.

It catalyses the reaction GTP + AH2 + S-adenosyl-L-methionine = (8S)-3',8-cyclo-7,8-dihydroguanosine 5'-triphosphate + 5'-deoxyadenosine + L-methionine + A + H(+). It participates in cofactor biosynthesis; molybdopterin biosynthesis. Its function is as follows. Catalyzes the cyclization of GTP to (8S)-3',8-cyclo-7,8-dihydroguanosine 5'-triphosphate. The protein is GTP 3',8-cyclase of Yersinia pestis.